The sequence spans 474 residues: ATP synthase subunit beta 2 (474 aa).

Residue G153–T160 coordinates ATP.

The protein belongs to the ATPase alpha/beta chains family. In terms of assembly, F-type ATPases have 2 components, CF(1) - the catalytic core - and CF(0) - the membrane proton channel. CF(1) has five subunits: alpha(3), beta(3), gamma(1), delta(1), epsilon(1). CF(0) has three main subunits: a(1), b(2) and c(9-12). The alpha and beta chains form an alternating ring which encloses part of the gamma chain. CF(1) is attached to CF(0) by a central stalk formed by the gamma and epsilon chains, while a peripheral stalk is formed by the delta and b chains.

The protein resides in the cell inner membrane. The enzyme catalyses ATP + H2O + 4 H(+)(in) = ADP + phosphate + 5 H(+)(out). Its function is as follows. Produces ATP from ADP in the presence of a proton gradient across the membrane. The catalytic sites are hosted primarily by the beta subunits. In Syntrophotalea carbinolica (strain DSM 2380 / NBRC 103641 / GraBd1) (Pelobacter carbinolicus), this protein is ATP synthase subunit beta 2.